Reading from the N-terminus, the 222-residue chain is Hexitol phosphatase B (222 aa).

D13 acts as the Nucleophile in catalysis. The a divalent metal cation site is built by D13 and D15. Residues 13 to 15, 115 to 116, and K148 each bind substrate; these read DMD and SA. Residue D15 is the Proton donor of the active site. Residue D173 coordinates a divalent metal cation.

It belongs to the HAD-like hydrolase superfamily. CbbY/CbbZ/Gph/YieH family. Requires Mg(2+) as cofactor. The cofactor is Mn(2+). Co(2+) serves as cofactor. It depends on Zn(2+) as a cofactor.

The catalysed reaction is sugar phosphate + H2O = sugar + phosphate.. The enzyme catalyses 2-deoxy-D-glucose 6-phosphate + H2O = 2-deoxy-D-glucose + phosphate. It carries out the reaction D-mannitol 1-phosphate + H2O = D-mannitol + phosphate. It catalyses the reaction D-sorbitol 6-phosphate + H2O = D-sorbitol + phosphate. In terms of biological role, sugar-phosphate phosphohydrolase that catalyzes the dephosphorylation of D-mannitol 1-phosphate and D-sorbitol 6-phosphate. Also catalyzes the dephosphorylation of 2-deoxyglucose 6-phosphate (2dGlu6P); this is a biologically important activity in vivo since it contributes to the elimination of this toxic compound and plays an important role in the resistance of E.coli to 2-deoxyglucose. The chain is Hexitol phosphatase B from Escherichia coli O157:H7.